We begin with the raw amino-acid sequence, 413 residues long: Divalent metal cation transporter MntH (413 aa).

Residues 1-19 lie on the Cytoplasmic side of the membrane; that stretch reads MTDNRVENSSGRAARKLRL. The helical transmembrane segment at 20 to 39 threads the bilayer; that stretch reads ALMGPAFIAAIGYIDPGNFA. At 40–51 the chain is on the periplasmic side; it reads TNIQAGASFGYQ. A helical transmembrane segment spans residues 52–71; sequence LLWVVVWANLMAMLIQILSA. Residues 72–95 are Cytoplasmic-facing; that stretch reads KLGIATGKNLAEQIRDHYPRPVVW. The helical transmembrane segment at 96–118 threads the bilayer; that stretch reads FYWVQAEIIAMATDLAEFIGAAI. The Periplasmic portion of the chain corresponds to 119 to 125; the sequence is GFKLILG. The chain crosses the membrane as a helical span at residues 126 to 145; it reads VSLLQGAVLTGIATFLILML. Over 146 to 155 the chain is Cytoplasmic; that stretch reads QRRGQKPLEK. The chain crosses the membrane as a helical span at residues 156 to 175; sequence VIGGLLLFVAAAYIVELFFS. Over 176 to 196 the chain is Periplasmic; it reads QPDMAQLGKGMVIPALPNPEA. Residues 197–220 form a helical membrane-spanning segment; sequence VFLAAGVLGATIMPHVIYLHSSLT. Topologically, residues 221–238 are cytoplasmic; that stretch reads QHLHGGTRQQRYSATKWD. The helical transmembrane segment at 239–258 threads the bilayer; sequence VAIAMTIAGFVNLAMMATAA. The Periplasmic portion of the chain corresponds to 259–276; it reads AAFHFSGHTGIADLDQAY. Residues 277–297 traverse the membrane as a helical segment; that stretch reads LTLEPLLSHAAATVFGLSLVA. The Cytoplasmic portion of the chain corresponds to 298 to 327; sequence AGLSSTVVGTLAGQVVMQGFVRFHIPLWVR. The helical transmembrane segment at 328 to 344 threads the bilayer; it reads RSITMLPSFIVILMGLD. Over 345-350 the chain is Periplasmic; it reads PTRILV. Residues 351–370 traverse the membrane as a helical segment; sequence MSQVLLSFGIALALVPLLIF. Over 371 to 387 the chain is Cytoplasmic; it reads TSNATLMGELVNTRRVK. Residues 388–406 form a helical membrane-spanning segment; the sequence is QIGWIIVVLVVALNIWLLV. Residues 407–413 lie on the Periplasmic side of the membrane; sequence GTVMGLS.

This sequence belongs to the NRAMP family.

It localises to the cell inner membrane. Functionally, h(+)-stimulated, divalent metal cation uptake system. The polypeptide is Divalent metal cation transporter MntH (Salmonella gallinarum (strain 287/91 / NCTC 13346)).